Here is a 61-residue protein sequence, read N- to C-terminus: Adipokinetic prohormone type 2 (61 aa).

Residues 1–22 form the signal peptide; the sequence is MRQGCALTLMLLVVVCAALSAA. Gln23 is subject to Pyrrolidone carboxylic acid. Residue Trp30 is modified to Tryptophan amide.

The protein belongs to the AKH/HRTH/RPCH family. In terms of assembly, adipokinetic hormone precursor-related peptide (APRP) can form three type of disulfide-bond dimers: p1 (alpha-alpha), p2 (alpha-beta), and p3 (beta-beta).

It is found in the secreted. Its function is as follows. This hormone, released from cells in the corpora cardiaca, causes release of diglycerides from the fat body and stimulation of muscles to use these diglycerides as an energy source during energy-demanding processes. The polypeptide is Adipokinetic prohormone type 2 (Schistocerca nitens (Vagrant locust)).